We begin with the raw amino-acid sequence, 459 residues long: MSKIVVVGANHAGTACINTMLDNFGNENEIVVFDQNSNISFLGCGMALWIGEQIDGAEGLFYSDKEKLEAKGAKVYMNSPVLSIDYDNKVVTAEVEGKEHKESYEKLIFATGSTPILPPIEGVEIVKGNREFKATLENVQFVKLYQNAEEVINKLSDKSQHLDRIAVVGGGYIGVELAEAFERLGKEVVLVDIVDTVLNGYYDKDFTQMMAKNLEDHNIRLALGQTVKAIEGDGKVERLITDKESFDVDMVILAVGFRPNTALAGGKIELFRNGAFLVDKKQETSIPDVYAVGDCATVYDNARKDTSYIALASNAVRTGIVGAYNACGHELEGIGVQGSNGISIYGLHMVSTGLTLEKAKAAGYNATETGFNDLQKPEFMKHDNHEVAIKIVFDKDSREILGAQMVSHDIAISMGIHMFSLAIQEHVTIDKLALTDLFFLPHFNKPYNYITMAALTAEK.

Asparagine 10 lines the FAD pocket. Histidine 11 functions as the Proton acceptor in the catalytic mechanism. Residues alanine 12, aspartate 34, glutamine 35, cysteine 44, valine 81, alanine 110, serine 113, lysine 143, and tyrosine 172 each coordinate FAD. The Redox-active role is filled by cysteine 44. Position 44 is a cysteine sulfinic acid (-SO2H) (cysteine 44). NAD(+)-binding residues include isoleucine 173, aspartate 192, tyrosine 201, and glycine 256. Aspartate 294 is an FAD binding site. Alanine 310 lines the NAD(+) pocket. Positions 311, 312, and 313 each coordinate FAD. Glycine 341 contacts NAD(+). Phenylalanine 439 lines the FAD pocket.

The protein belongs to the class-III pyridine nucleotide-disulfide oxidoreductase family. Requires FAD as cofactor.

The protein resides in the secreted. It is found in the cell wall. It catalyses the reaction 2 NADH + O2 + 2 H(+) = 2 NAD(+) + 2 H2O. In terms of biological role, catalyzes the four-electron reduction of molecular oxygen to water. Plays a role in redox balance maintenance. May be involved in mediating bacterial adhesion to host cells. May be considered a potential virulence factor. This Streptococcus pneumoniae serotype 4 (strain ATCC BAA-334 / TIGR4) protein is NADH oxidase.